The following is a 356-amino-acid chain: Histidinol-phosphate aminotransferase (356 aa).

K214 carries the N6-(pyridoxal phosphate)lysine modification.

It belongs to the class-II pyridoxal-phosphate-dependent aminotransferase family. Histidinol-phosphate aminotransferase subfamily. As to quaternary structure, homodimer. Requires pyridoxal 5'-phosphate as cofactor.

The enzyme catalyses L-histidinol phosphate + 2-oxoglutarate = 3-(imidazol-4-yl)-2-oxopropyl phosphate + L-glutamate. Its pathway is amino-acid biosynthesis; L-histidine biosynthesis; L-histidine from 5-phospho-alpha-D-ribose 1-diphosphate: step 7/9. In Shigella sonnei (strain Ss046), this protein is Histidinol-phosphate aminotransferase.